A 366-amino-acid chain; its full sequence is Ferrochelatase (366 aa).

Fe cation contacts are provided by His210 and Glu293.

This sequence belongs to the ferrochelatase family.

The protein resides in the cytoplasm. The enzyme catalyses heme b + 2 H(+) = protoporphyrin IX + Fe(2+). It functions in the pathway porphyrin-containing compound metabolism; protoheme biosynthesis; protoheme from protoporphyrin-IX: step 1/1. In terms of biological role, catalyzes the ferrous insertion into protoporphyrin IX. The sequence is that of Ferrochelatase from Leptospira borgpetersenii serovar Hardjo-bovis (strain L550).